Reading from the N-terminus, the 177-residue chain is MDIRPARISDLTGMQNCNLHNLPENYQLKYYLYHAISWPMLSYVATDPKGRVVGYVLAKMEEEPKDGIPHGHITSVSVMRSYRHLGLAKRLMVQSQRAMVEVYGAKYMSLHVRKSNRAAIHLYRDTLQFDVQGIESKYYADGEDAYAMHKDFSTLKFDTPETNDELAKTVQSLALNN.

The 153-residue stretch at 1–153 (MDIRPARISD…DAYAMHKDFS (153 aa)) folds into the N-acetyltransferase domain.

This sequence belongs to the acetyltransferase family. ARD1 subfamily. As to quaternary structure, component of the N-terminal acetyltransferase A (NatA) complex, which is composed of at least ard1 and nat1.

The protein localises to the cytoplasm. The protein resides in the nucleus. It catalyses the reaction N-terminal glycyl-[protein] + acetyl-CoA = N-terminal N(alpha)-acetylglycyl-[protein] + CoA + H(+). The catalysed reaction is N-terminal L-alanyl-[protein] + acetyl-CoA = N-terminal N(alpha)-acetyl-L-alanyl-[protein] + CoA + H(+). The enzyme catalyses N-terminal L-seryl-[protein] + acetyl-CoA = N-terminal N(alpha)-acetyl-L-seryl-[protein] + CoA + H(+). It carries out the reaction N-terminal L-valyl-[protein] + acetyl-CoA = N-terminal N(alpha)-acetyl-L-valyl-[protein] + CoA + H(+). It catalyses the reaction N-terminal L-cysteinyl-[protein] + acetyl-CoA = N-terminal N(alpha)-acetyl-L-cysteinyl-[protein] + CoA + H(+). The catalysed reaction is N-terminal L-threonyl-[protein] + acetyl-CoA = N-terminal N(alpha)-acetyl-L-threonyl-[protein] + CoA + H(+). In terms of biological role, catalytic component of the NatA N-terminal acetyltransferase, which catalyzes acetylation of proteins beginning with Met-Ser, Met-Gly and Met-Ala. N-acetylation plays a role in normal eukaryotic translation and processing, protect against proteolytic degradation and protein turnover. The polypeptide is N-terminal acetyltransferase A complex catalytic subunit ard1 (ard1) (Schizosaccharomyces pombe (strain 972 / ATCC 24843) (Fission yeast)).